The following is a 634-amino-acid chain: MAHYNFKKITVVPSAKDFIDLTLSKTQRKTPTVIHKHYQIHRIRHFYMRKVKFTQQNYHDRLSQILTDFPKLDDIHPFYADLMNILYDKDHYKLALGQINIAKNLVDNVAKDYVRLMKYGDSLYRCKQLKRAALGRMCTVIKRQKQSLEYLEQVRQHLSRLPTIDPNTRTLLLCGYPNVGKSSFINKVTRADVDVQPYAFTTKSLFVGHMDYKYLRWQVVDTPGILDHPLEDRNTIEMQAITALAHLRAAVLYVMDLSEQCGHGLREQLELFQNIRPLFINKPLIVVANKCDVKRIAELSEDDQKIFTDLQSEGFPVIETSTLTEEGVIKVKTEACDRLLAHRVETKMKGNKVNEVLNRLHLAIPTRRDDKERPPFIPEGVVARRKRMETEESRKKRERDLELEMGDDYILDLQKYWDLMNLSEKHDKIPEIWEGHNIADYIDPAIMKKLEELEKEEELRTAAGEYDSVSESEDEEMLEIRQLAKQIREKKKLKILESKEKNTQGPRMPRTAKKVQRTVLEKEMRSLGVDMDDKDDAHYAVQARRSRSITRKRKREDSAPPSSVARSGSCSRTPRDVSGLRDVKMVKKAKTMMKNAQKKMNRLGKKGEADRHVFDMKPKHLLSGKRKAGKKDRR.

The residue at position 2 (Ala-2) is an N-acetylalanine. At Lys-103 the chain carries N6-acetyllysine; alternate. Residue Lys-103 forms a Glycyl lysine isopeptide (Lys-Gly) (interchain with G-Cter in SUMO2); alternate linkage. A Phosphoserine modification is found at Ser-122. An OBG-type G domain is found at 169 to 340; the sequence is RTLLLCGYPN…VKTEACDRLL (172 aa). GTP is bound by residues 175 to 182, 221 to 225, and 289 to 292; these read GYPNVGKS, DTPGI, and NKCD. Lys-332 participates in a covalent cross-link: Glycyl lysine isopeptide (Lys-Gly) (interchain with G-Cter in SUMO2). Residues Ser-468, Ser-470, and Ser-472 each carry the phosphoserine modification. The segment at 495 to 517 is disordered; it reads ILESKEKNTQGPRMPRTAKKVQR. Lys-522 carries the post-translational modification N6-acetyllysine. The segment at 529–634 is disordered; sequence VDMDDKDDAH…KRKAGKKDRR (106 aa). A Glycyl lysine isopeptide (Lys-Gly) (interchain with G-Cter in SUMO2) cross-link involves residue Lys-534. Residues 544–554 show a composition bias toward basic residues; that stretch reads RRSRSITRKRK. A Phosphoserine modification is found at Ser-558. A compositionally biased stretch (polar residues) spans 560-572; it reads PPSSVARSGSCSR. The segment covering 573–585 has biased composition (basic and acidic residues); the sequence is TPRDVSGLRDVKM. Positions 586–604 are enriched in basic residues; sequence VKKAKTMMKNAQKKMNRLG. Positions 605-618 are enriched in basic and acidic residues; that stretch reads KKGEADRHVFDMKP. Residues 619–634 are compositionally biased toward basic residues; that stretch reads KHLLSGKRKAGKKDRR.

The protein belongs to the TRAFAC class OBG-HflX-like GTPase superfamily. OBG GTPase family. NOG subfamily. In terms of assembly, associates with pre-60S ribosomal particles. Interacts with MINAS-60 (product of an alternative open reading frame of RBM10).

The protein resides in the nucleus. Its subcellular location is the nucleolus. In terms of biological role, involved in the biogenesis of the 60S ribosomal subunit. Acts as a TP53 repressor, preventing TP53 stabilization and cell cycle arrest. The protein is GTP-binding protein 4 of Homo sapiens (Human).